A 294-amino-acid chain; its full sequence is Acetylglutamate kinase (294 aa).

Residues 63-64, R85, and N188 contribute to the substrate site; that span reads GG.

The protein belongs to the acetylglutamate kinase family. ArgB subfamily.

The protein resides in the cytoplasm. It carries out the reaction N-acetyl-L-glutamate + ATP = N-acetyl-L-glutamyl 5-phosphate + ADP. The protein operates within amino-acid biosynthesis; L-arginine biosynthesis; N(2)-acetyl-L-ornithine from L-glutamate: step 2/4. Functionally, catalyzes the ATP-dependent phosphorylation of N-acetyl-L-glutamate. The chain is Acetylglutamate kinase from Methanococcus aeolicus (strain ATCC BAA-1280 / DSM 17508 / OCM 812 / Nankai-3).